The following is a 362-amino-acid chain: Phosphoglycolate phosphatase 1B, chloroplastic (362 aa).

The transit peptide at 1–54 (MLSRSVASAVTPVSSSSLLPNSKPIFCLKTLSGYRSSSFCGGCIRKINHKPLRM) directs the protein to the chloroplast. Position 55 is an N-acetylthreonine (Thr55). The active-site Nucleophile is the Glu80. Ser356 bears the Phosphoserine mark.

The protein belongs to the HAD-like hydrolase superfamily. CbbY/CbbZ/Gph/YieH family.

It is found in the plastid. It localises to the chloroplast. The catalysed reaction is 2-phosphoglycolate + H2O = glycolate + phosphate. In terms of biological role, photorespiratory enzyme that dephosphorylates the 2-phosphoglycolate produced by the RuBisCO oxygenation reaction. The protein is Phosphoglycolate phosphatase 1B, chloroplastic (PGLP1B) of Arabidopsis thaliana (Mouse-ear cress).